We begin with the raw amino-acid sequence, 334 residues long: Ferrochelatase (334 aa).

2 residues coordinate Fe cation: H207 and E288.

This sequence belongs to the ferrochelatase family.

It is found in the cytoplasm. The enzyme catalyses heme b + 2 H(+) = protoporphyrin IX + Fe(2+). It functions in the pathway porphyrin-containing compound metabolism; protoheme biosynthesis; protoheme from protoporphyrin-IX: step 1/1. Catalyzes the ferrous insertion into protoporphyrin IX. In Helicobacter pylori (strain ATCC 700392 / 26695) (Campylobacter pylori), this protein is Ferrochelatase.